A 324-amino-acid polypeptide reads, in one-letter code: 4-hydroxy-2-oxoglutarate aldolase, mitochondrial (324 aa).

The transit peptide at 1-22 directs the protein to the mitochondrion; that stretch reads MFAHRSFSLLCRRSAVTSWRSQ. 74-75 lines the substrate pocket; it reads SN. Residue Lys-193 is the Schiff-base intermediate with substrate of the active site. Positions 195 and 219 each coordinate substrate.

This sequence belongs to the DapA family. As to quaternary structure, homotetramer.

The protein resides in the mitochondrion. It carries out the reaction (4S)-4-hydroxy-2-oxoglutarate = glyoxylate + pyruvate. It catalyses the reaction (4R)-4-hydroxy-2-oxoglutarate = glyoxylate + pyruvate. With respect to regulation, inhibited by divalent cations. Functionally, catalyzes the final step in the metabolic pathway of hydroxyproline. This chain is 4-hydroxy-2-oxoglutarate aldolase, mitochondrial, found in Danio rerio (Zebrafish).